Consider the following 371-residue polypeptide: Cysteine proteinase EP-B 1 (371 aa).

The N-terminal stretch at 1–28 (MGLLSKKLLVASMVAAVLAVAAVELCSA) is a signal peptide. Positions 29–133 (IPMEDKDLES…FMYAALNVSD (105 aa)) are cleaved as a propeptide — activation peptide. N-linked (GlcNAc...) asparagine glycosylation is present at Asn130. Disulfide bonds link Cys155-Cys197, Cys189-Cys230, and Cys291-Cys343. The active site involves Cys158. Residues His297 and Asn318 contribute to the active site.

Belongs to the peptidase C1 family.

This chain is Cysteine proteinase EP-B 1, found in Hordeum vulgare (Barley).